Consider the following 459-residue polypeptide: Bifunctional protein GlmU (459 aa).

Residues 1-229 are pyrophosphorylase; that stretch reads MSNFAIILAA…FDESLGVNDR (229 aa). Residues 8–11, lysine 22, glutamine 72, and 77–78 contribute to the UDP-N-acetyl-alpha-D-glucosamine site; these read LAAG and GT. Aspartate 102 is a Mg(2+) binding site. The UDP-N-acetyl-alpha-D-glucosamine site is built by glycine 139, glutamate 154, asparagine 169, and asparagine 227. Asparagine 227 is a binding site for Mg(2+). A linker region spans residues 230 to 250; the sequence is VALATAESVMRRRINHKHMVN. The interval 251–459 is N-acetyltransferase; sequence GVSFVNPEAT…TRLPHHPKNQ (209 aa). UDP-N-acetyl-alpha-D-glucosamine-binding residues include arginine 332 and lysine 350. Histidine 362 functions as the Proton acceptor in the catalytic mechanism. Tyrosine 365 and asparagine 376 together coordinate UDP-N-acetyl-alpha-D-glucosamine. Acetyl-CoA contacts are provided by residues alanine 379, 385 to 386, serine 404, alanine 422, and arginine 439; that span reads NY.

This sequence in the N-terminal section; belongs to the N-acetylglucosamine-1-phosphate uridyltransferase family. In the C-terminal section; belongs to the transferase hexapeptide repeat family. As to quaternary structure, homotrimer. Mg(2+) serves as cofactor.

Its subcellular location is the cytoplasm. It catalyses the reaction alpha-D-glucosamine 1-phosphate + acetyl-CoA = N-acetyl-alpha-D-glucosamine 1-phosphate + CoA + H(+). It carries out the reaction N-acetyl-alpha-D-glucosamine 1-phosphate + UTP + H(+) = UDP-N-acetyl-alpha-D-glucosamine + diphosphate. Its pathway is nucleotide-sugar biosynthesis; UDP-N-acetyl-alpha-D-glucosamine biosynthesis; N-acetyl-alpha-D-glucosamine 1-phosphate from alpha-D-glucosamine 6-phosphate (route II): step 2/2. The protein operates within nucleotide-sugar biosynthesis; UDP-N-acetyl-alpha-D-glucosamine biosynthesis; UDP-N-acetyl-alpha-D-glucosamine from N-acetyl-alpha-D-glucosamine 1-phosphate: step 1/1. It participates in bacterial outer membrane biogenesis; LPS lipid A biosynthesis. Its function is as follows. Catalyzes the last two sequential reactions in the de novo biosynthetic pathway for UDP-N-acetylglucosamine (UDP-GlcNAc). The C-terminal domain catalyzes the transfer of acetyl group from acetyl coenzyme A to glucosamine-1-phosphate (GlcN-1-P) to produce N-acetylglucosamine-1-phosphate (GlcNAc-1-P), which is converted into UDP-GlcNAc by the transfer of uridine 5-monophosphate (from uridine 5-triphosphate), a reaction catalyzed by the N-terminal domain. This Streptococcus pneumoniae (strain 70585) protein is Bifunctional protein GlmU.